A 1029-amino-acid polypeptide reads, in one-letter code: Error-prone DNA polymerase (1029 aa).

Belongs to the DNA polymerase type-C family. DnaE2 subfamily.

It is found in the cytoplasm. The catalysed reaction is DNA(n) + a 2'-deoxyribonucleoside 5'-triphosphate = DNA(n+1) + diphosphate. DNA polymerase involved in damage-induced mutagenesis and translesion synthesis (TLS). It is not the major replicative DNA polymerase. The sequence is that of Error-prone DNA polymerase from Saccharophagus degradans (strain 2-40 / ATCC 43961 / DSM 17024).